A 528-amino-acid chain; its full sequence is Beta-galactoside alpha-2,6-sialyltransferase 2 (528 aa).

The Cytoplasmic portion of the chain corresponds to 1-10; that stretch reads MKPNLKQWKQ. Residues 11 to 31 traverse the membrane as a helical; Signal-anchor for type II membrane protein segment; it reads LMLFGIFAWGLLFLVIFIYFT. The Lumenal segment spans residues 32 to 528; that stretch reads DSNSAEPVPS…CPERNNFPPL (497 aa). N-linked (GlcNAc...) asparagine glycosylation is found at Asn167, Asn308, and Asn338. 3 cysteine pairs are disulfide-bonded: Cys254–Cys519, Cys297–Cys448, and Cys466–Cys477.

It belongs to the glycosyltransferase 29 family.

Its subcellular location is the golgi apparatus. The protein resides in the golgi stack membrane. It catalyses the reaction a beta-D-galactoside + CMP-N-acetyl-beta-neuraminate = an N-acetyl-alpha-neuraminyl-(2-&gt;6)-beta-D-galactosyl derivative + CMP + H(+). In terms of biological role, transfers sialic acid from the donor of substrate CMP-sialic acid to galactose containing acceptor substrates. In Gallus gallus (Chicken), this protein is Beta-galactoside alpha-2,6-sialyltransferase 2 (ST6GAL2).